A 262-amino-acid chain; its full sequence is Intron-encoded DNA endonuclease ai2b (262 aa).

This sequence belongs to the LAGLIDADG endonuclease family.

The protein localises to the mitochondrion. Functionally, mitochondrial DNA endonuclease involved in intron homing. The protein is Intron-encoded DNA endonuclease ai2b (ai2b) of Dictyostelium discoideum (Social amoeba).